A 432-amino-acid polypeptide reads, in one-letter code: MPAIAIIGAQWGDEGKGKATDLLGTSVDYVVKFNGGNNAGHTVVITDASGHTEKYALHLLPSGILTPGCTPVIGNGVVVDLAVLFEELDALEQRGVDVSRLRISANAHVIADYNRTLDKVTERFLGSRRIGTTGRGIGPTYADKMNRIGIRVQDIFDEKILTQKVEGVLDLKNQVLTKIYNRRAATVEATVEELLAFADRLRPMVCDTGLLLNQALDRGETVLLEAGQATLLDVDHGTYPFVTSSSATAGGACTGSGIPPRRLEQVIGIVKAYTTRVGEGPFPTELHDDAGEHLRKVGAEFGTTTGRPRRCGWYDAVIARYAARVNGVTDFVLTKLDVLTGLEQVPVCVAYDVGGVRHDEMPVNQTDFHHAVPIYEYLPGWWEDISGARTLADLPANAQAYVKAVEEMSGARISAVGVGPSRDATVAIHDLI.

GTP contacts are provided by residues 12–18 (GDEGKGK) and 40–42 (GHT). Asp-13 acts as the Proton acceptor in catalysis. Mg(2+) is bound by residues Asp-13 and Gly-40. IMP-binding positions include 13–16 (DEGK), 38–41 (NAGH), Thr-133, Arg-147, Gln-228, Thr-243, and Arg-307. His-41 acts as the Proton donor in catalysis. 303-309 (TTTGRPR) lines the substrate pocket. GTP contacts are provided by residues Arg-309, 335–337 (KLD), and 417–419 (GVG).

This sequence belongs to the adenylosuccinate synthetase family. Homodimer. Mg(2+) is required as a cofactor.

Its subcellular location is the cytoplasm. The enzyme catalyses IMP + L-aspartate + GTP = N(6)-(1,2-dicarboxyethyl)-AMP + GDP + phosphate + 2 H(+). It participates in purine metabolism; AMP biosynthesis via de novo pathway; AMP from IMP: step 1/2. Functionally, plays an important role in the de novo pathway of purine nucleotide biosynthesis. Catalyzes the first committed step in the biosynthesis of AMP from IMP. This Nocardioides sp. (strain ATCC BAA-499 / JS614) protein is Adenylosuccinate synthetase.